A 209-amino-acid polypeptide reads, in one-letter code: Outer-membrane lipoprotein carrier protein (209 aa).

An N-terminal signal peptide occupies residues 1 to 21 (MHRQLRYAVLATALFASTAFA).

The protein belongs to the LolA family. As to quaternary structure, monomer.

It localises to the periplasm. Its function is as follows. Participates in the translocation of lipoproteins from the inner membrane to the outer membrane. Only forms a complex with a lipoprotein if the residue after the N-terminal Cys is not an aspartate (The Asp acts as a targeting signal to indicate that the lipoprotein should stay in the inner membrane). This is Outer-membrane lipoprotein carrier protein from Xanthomonas oryzae pv. oryzae (strain MAFF 311018).